The following is a 139-amino-acid chain: D-ribose pyranase (139 aa).

Catalysis depends on histidine 20, which acts as the Proton donor. Residues aspartate 28, histidine 106, and 128 to 130 each bind substrate; that span reads YAN.

Belongs to the RbsD / FucU family. RbsD subfamily. Homodecamer.

It is found in the cytoplasm. The enzyme catalyses beta-D-ribopyranose = beta-D-ribofuranose. It functions in the pathway carbohydrate metabolism; D-ribose degradation; D-ribose 5-phosphate from beta-D-ribopyranose: step 1/2. Functionally, catalyzes the interconversion of beta-pyran and beta-furan forms of D-ribose. The chain is D-ribose pyranase from Escherichia coli O81 (strain ED1a).